We begin with the raw amino-acid sequence, 536 residues long: SNW domain-containing protein 1 (536 aa).

Residues 1–46 (MALTSFLPAPTQLSQDQLEAEEKARSQRSRQTSLVSSRREPPPYGY) form a disordered region. Ala2 carries the post-translational modification N-acetylalanine. Phosphoserine is present on Ser14. Residue Lys23 forms a Glycyl lysine isopeptide (Lys-Gly) (interchain with G-Cter in SUMO2) linkage. An interaction with PPIL1 region spans residues 59–79 (GDGGAFPEIHVAQYPLDMGRK). Residues Lys81, Lys97, Lys115, Lys122, Lys141, Lys158, and Lys170 each participate in a glycyl lysine isopeptide (Lys-Gly) (interchain with G-Cter in SUMO2) cross-link. An SNW region spans residues 174-339 (AQYIRYTPSQ…KARERRAGIK (166 aa)). Ser182 and Ser190 each carry phosphoserine. Lys193 is covalently cross-linked (Glycyl lysine isopeptide (Lys-Gly) (interchain with G-Cter in SUMO2)). Residues 209-233 (PPRFKINKKIPRGPPSPPAPVMHSP) are disordered. Phosphoserine occurs at positions 224, 232, and 234. Glycyl lysine isopeptide (Lys-Gly) (interchain with G-Cter in SUMO2) cross-links involve residues Lys240, Lys258, Lys286, Lys339, Lys344, Lys416, Lys441, and Lys452. Positions 311–386 (KMAQKEKEKH…RSKLQRNENR (76 aa)) are disordered. 2 stretches are compositionally biased toward basic and acidic residues: residues 472–489 (FVPDKEFSGSDRRQRGRE) and 503–530 (KFLEEAKQHGGSKRPSDSSRPKEHEHEG). The segment at 472 to 536 (FVPDKEFSGS…EHEGKKRRKE (65 aa)) is disordered. A phosphoserine mark is found at Ser479 and Ser481. A Glycyl lysine isopeptide (Lys-Gly) (interchain with G-Cter in SUMO2) cross-link involves residue Lys509.

Belongs to the SNW family. In terms of assembly, identified in the spliceosome C complex. Associates with U4/U6-U5 tri-small nuclear ribonucleoproteins (U4/U6-U5 tri-snRNPs). Component of the minor spliceosome, which splices U12-type introns. Interacts with SKI, SMAD2,SMAD3, RBPJ, RB1, PABPN1, MAGEA1, SIRT1, FOXN3, U2AF2, PPIL1, DAXX and ATP1B4. Interacts with VDR and RXRA; preferentially associates with VDR:RXRA heterodimers. Interacts with NCOR2. Interacts with MAML1. Interacts with NOTCH1 NICD; the interaction involves multimerized NOTCH1 NICD. Forms a complex with NOTCH1 NICD and MAML1; the association is dissociated by RBPJ. Associates with positive transcription elongation factor b (P-TEFb). Component of the SNARP complex which consists at least of SNIP1, SNW1, THRAP3, BCLAF1 and PNN.

The protein localises to the nucleus. Functionally, involved in pre-mRNA splicing as component of the spliceosome. As a component of the minor spliceosome, involved in the splicing of U12-type introns in pre-mRNAs. Required in the specific splicing of CDKN1A pre-mRNA; the function probably involves the recruitment of U2AF2 to the mRNA. May recruit PPIL1 to the spliceosome. May be involved in cyclin-D1/CCND1 mRNA stability through the SNARP complex which associates with both the 3'end of the CCND1 gene and its mRNA. Involved in transcriptional regulation. Modulates TGF-beta-mediated transcription via association with SMAD proteins, MYOD1-mediated transcription via association with PABPN1, RB1-mediated transcriptional repression, and retinoid-X receptor (RXR)- and vitamin D receptor (VDR)-dependent gene transcription in a cell line-specific manner probably involving coactivators NCOA1 and GRIP1. Is involved in NOTCH1-mediated transcriptional activation. Binds to multimerized forms of Notch intracellular domain (NICD) and is proposed to recruit transcriptional coactivators such as MAML1 to form an intermediate preactivation complex which associates with DNA-bound CBF-1/RBPJ to form a transcriptional activation complex by releasing SNW1 and redundant NOTCH1 NICD. The sequence is that of SNW domain-containing protein 1 (SNW1) from Bos taurus (Bovine).